The sequence spans 649 residues: Pesticidal crystal protein Cry3Ca (649 aa).

Over residues 1–13 (MNPNNRSEHDTIK) the composition is skewed to basic and acidic residues. The interval 1-29 (MNPNNRSEHDTIKATENNEVSNNHAQYPL) is disordered. Positions 14–25 (ATENNEVSNNHA) are enriched in polar residues.

This sequence belongs to the delta endotoxin family.

Functionally, promotes colloidosmotic lysis by binding to the midgut epithelial cells of Coleoptera. This Bacillus thuringiensis subsp. kurstaki protein is Pesticidal crystal protein Cry3Ca (cry3Ca).